The primary structure comprises 186 residues: Peptide deformylase (186 aa).

2 residues coordinate Fe cation: C113 and H156. Residue E157 is part of the active site. H160 serves as a coordination point for Fe cation.

The protein belongs to the polypeptide deformylase family. Fe(2+) serves as cofactor.

It catalyses the reaction N-terminal N-formyl-L-methionyl-[peptide] + H2O = N-terminal L-methionyl-[peptide] + formate. Its function is as follows. Removes the formyl group from the N-terminal Met of newly synthesized proteins. Requires at least a dipeptide for an efficient rate of reaction. N-terminal L-methionine is a prerequisite for activity but the enzyme has broad specificity at other positions. In Levilactobacillus brevis (strain ATCC 367 / BCRC 12310 / CIP 105137 / JCM 1170 / LMG 11437 / NCIMB 947 / NCTC 947) (Lactobacillus brevis), this protein is Peptide deformylase.